Consider the following 491-residue polypeptide: Pyruvate carboxylase subunit A (491 aa).

The Biotin carboxylation domain occupies 1-445; the sequence is MFSKILVANR…HTHFVDEYRR (445 aa). ATP contacts are provided by Lys-116, Glu-200, and His-235. Residues 120–316 form the ATP-grasp domain; that stretch reads KKLMKKAGVP…LVKEQIRVAS (197 aa). Arg-291 is a catalytic residue.

In terms of assembly, heterooctamer of four A and four B subunits. The cofactor is Mg(2+). Mn(2+) is required as a cofactor. It depends on Co(2+) as a cofactor.

The catalysed reaction is hydrogencarbonate + pyruvate + ATP = oxaloacetate + ADP + phosphate + H(+). It participates in carbohydrate biosynthesis; gluconeogenesis. Inhibited by ADP and alpha-ketoglutarate. Its function is as follows. Pyruvate carboxylase catalyzes a 2-step reaction, involving the ATP-dependent carboxylation of the covalently attached biotin in the first step and the transfer of the carboxyl group to pyruvate in the second. This chain is Pyruvate carboxylase subunit A (pycA), found in Methanothermobacter thermautotrophicus (strain ATCC 29096 / DSM 1053 / JCM 10044 / NBRC 100330 / Delta H) (Methanobacterium thermoautotrophicum).